The primary structure comprises 834 residues: Ras GTPase-activating protein 3 (834 aa).

C2 domains follow at residues 1–112 (MAVE…DTWF) and 123–263 (VQGK…EAWY). A2 is modified (N-acetylalanine). Y66 is modified (phosphotyrosine). S77 bears the Phosphoserine mark. T110 carries the post-translational modification Phosphothreonine. A Ras-GAP domain is found at 346–561 (GRVVPFISAI…DAVKNFLDLI (216 aa)). A PH domain is found at 576 to 677 (ILLKEGFMIK…WIDILTKVSQ (102 aa)). The Btk-type zinc finger occupies 679-715 (NQKRLAVYHPSAYLNGHWLCCRASSDTAAGCSPCTGG). Zn(2+)-binding residues include H687, C698, C699, and C709. The disordered stretch occupies residues 806–834 (KYGSQEHPIGDKSFQSYIRQQSETPAHSM). Phosphoserine occurs at positions 809 and 833. The segment covering 818–834 (SFQSYIRQQSETPAHSM) has biased composition (polar residues).

Its function is as follows. Inhibitory regulator of the Ras-cyclic AMP pathway. May bind inositol tetrakisphosphate (IP4). The polypeptide is Ras GTPase-activating protein 3 (RASA3) (Bos taurus (Bovine)).